A 348-amino-acid chain; its full sequence is D-alanine--D-alanine ligase (348 aa).

In terms of domain architecture, ATP-grasp spans 136–344; the sequence is KSVFKSYNLP…LEKLVANLIE (209 aa). 171 to 226 contributes to the ATP binding site; sequence NKIISYPCFIKPANLGSSVGITKAYSKEEFIAGIEFAAKYDERIIVEKSIEGRELE. Mg(2+) contacts are provided by D297, E311, and N313.

It belongs to the D-alanine--D-alanine ligase family. Requires Mg(2+) as cofactor. It depends on Mn(2+) as a cofactor.

It localises to the cytoplasm. The enzyme catalyses 2 D-alanine + ATP = D-alanyl-D-alanine + ADP + phosphate + H(+). It functions in the pathway cell wall biogenesis; peptidoglycan biosynthesis. Its function is as follows. Cell wall formation. This Prochlorococcus marinus (strain NATL2A) protein is D-alanine--D-alanine ligase.